The sequence spans 86 residues: Gas vesicle protein A1 (86 aa).

This sequence belongs to the gas vesicle GvpA family. The gas vesicle shell is 2 nm thick and consists of a single layer of this protein. It forms helical ribs nearly perpendicular to the long axis of the vesicle.

The protein localises to the gas vesicle shell. Its function is as follows. Gas vesicles are hollow, gas filled proteinaceous nanostructures found in some microorganisms. During planktonic growth they allow positioning of the organism at a favorable depth for light or nutrient acquisition. GvpA forms the protein shell. In terms of biological role, it is not clear if the 2 type A proteins in this organism are functionally redundant. When the full gvp locus (gvpA1-gvpP-gvpQ-gvpA2-gvpR-gvpN-gvpF-gvpG-gvpL-gvpS-gvpK-gvpJ-gvpT-gvpU, called pNL26) is expressed in E.coli gas vesicles are made. The polypeptide is Gas vesicle protein A1 (Priestia megaterium (Bacillus megaterium)).